Consider the following 251-residue polypeptide: tRNA (guanine-N(7)-)-methyltransferase (251 aa).

The disordered stretch occupies residues 1-29 (MTQTLSSQDPQAPAAPPMPGAAGSAPADV). 4 residues coordinate S-adenosyl-L-methionine: E84, E109, D136, and D159. D159 is a catalytic residue. K163 contributes to the substrate binding site. The tract at residues 165 to 170 (RHNKRR) is interaction with RNA. Substrate is bound by residues D195 and 230 to 233 (TKFE).

This sequence belongs to the class I-like SAM-binding methyltransferase superfamily. TrmB family.

It carries out the reaction guanosine(46) in tRNA + S-adenosyl-L-methionine = N(7)-methylguanosine(46) in tRNA + S-adenosyl-L-homocysteine. Its pathway is tRNA modification; N(7)-methylguanine-tRNA biosynthesis. Functionally, catalyzes the formation of N(7)-methylguanine at position 46 (m7G46) in tRNA. In Acidovorax sp. (strain JS42), this protein is tRNA (guanine-N(7)-)-methyltransferase.